Consider the following 249-residue polypeptide: Chitooligosaccharide deacetylase (249 aa).

Mg(2+) is bound by residues H61 and H125.

This sequence belongs to the YdjC deacetylase family. ChbG subfamily. In terms of assembly, homodimer. The cofactor is Mg(2+).

The protein localises to the cytoplasm. The catalysed reaction is N,N'-diacetylchitobiose + H2O = N-acetyl-beta-D-glucosaminyl-(1-&gt;4)-D-glucosamine + acetate. It carries out the reaction diacetylchitobiose-6'-phosphate + H2O = N'-monoacetylchitobiose-6'-phosphate + acetate. The protein operates within glycan degradation; chitin degradation. In terms of biological role, involved in the degradation of chitin. ChbG is essential for growth on the acetylated chitooligosaccharides chitobiose and chitotriose but is dispensable for growth on cellobiose and chitosan dimer, the deacetylated form of chitobiose. Deacetylation of chitobiose-6-P and chitotriose-6-P is necessary for both the activation of the chb promoter by the regulatory protein ChbR and the hydrolysis of phosphorylated beta-glucosides by the phospho-beta-glucosidase ChbF. Catalyzes the removal of only one acetyl group from chitobiose-6-P to yield monoacetylchitobiose-6-P, the inducer of ChbR and the substrate of ChbF. The protein is Chitooligosaccharide deacetylase of Escherichia coli O7:K1 (strain IAI39 / ExPEC).